Reading from the N-terminus, the 262-residue chain is Lens fiber major intrinsic protein (262 aa).

At Met-1–Phe-9 the chain is on the cytoplasmic side. A helical membrane pass occupies residues Trp-10 to Gly-29. Topologically, residues Ala-30–Val-41 are extracellular. The helical transmembrane segment at Leu-42–Leu-59 threads the bilayer. Over Gly-60–His-61 the chain is Cytoplasmic. The segment at residues Val-62 to Leu-77 is an intramembrane region (discontinuously helical). Residues Asn-68–Ala-70 carry the NPA 1 motif. At Ala-78–Ser-82 the chain is on the cytoplasmic side. The helical transmembrane segment at Leu-83–Gly-106 threads the bilayer. The Extracellular portion of the chain corresponds to Val-107–Pro-127. The helical transmembrane segment at Gly-128–Ser-148 threads the bilayer. Residues Phe-149–Arg-156 are Cytoplasmic-facing. The helical transmembrane segment at Pro-157–Gly-175 threads the bilayer. The Extracellular portion of the chain corresponds to Ile-176–Phe-178. The discontinuously helical intramembrane region spans Thr-179–Val-193. Residues Asn-184–Ala-186 carry the NPA 2 motif. Topologically, residues Ile-194–Asn-200 are extracellular. A helical transmembrane segment spans residues His-201–Ala-222. At Leu-223 to Leu-262 the chain is on the cytoplasmic side. Positions Ala-227–Leu-237 are interaction with CALM. The segment at Glu-240–Leu-262 is disordered. Over residues Ala-243 to Glu-253 the composition is skewed to pro residues.

The protein belongs to the MIP/aquaporin (TC 1.A.8) family. As to quaternary structure, homotetramer; each monomer provides an independent water pore. Two homotetramers on opposing membranes can dimerize, forming a cell-cell junction. Interacts with CALM; the calcium-calmodulin/CALM complex interacts with the cytoplasmic domains of two aquaporins, leading to channel closure. During early stages of lens development, interacts through its C-terminal region with Cx56 and GJA8/Cx45.6. In terms of tissue distribution, major component of lens fiber gap junctions.

It localises to the cell membrane. It is found in the cell junction. The catalysed reaction is H2O(in) = H2O(out). With respect to regulation, the water channel activity is inhibited by calcium through calmodulin/CALM. Functionally, aquaporins form homotetrameric transmembrane channels, with each monomer independently mediating water transport across the plasma membrane along its osmotic gradient. Specifically expressed in lens fiber cells, this aquaporin is crucial for maintaining lens water homeostasis and transparency. Beyond water permeability, it also acts as a cell-to-cell adhesion molecule, forming thin junctions between lens fiber cells that are essential for maintaining the ordered structure and transparency of the lens. In Gallus gallus (Chicken), this protein is Lens fiber major intrinsic protein.